The sequence spans 518 residues: Beta-TrCP (518 aa).

The segment covering 1–12 (MEGFSCSLQPPT) has biased composition (polar residues). A disordered region spans residues 1 to 24 (MEGFSCSLQPPTASEREDCNRDEP). Basic and acidic residues predominate over residues 14 to 24 (SEREDCNRDEP). An F-box domain is found at 119-157 (DHIAENILSYLDAKSLCSAELVCKEWYRVTSDGMLWKKL). 7 WD repeats span residues 230 to 258 (ETSKGVYCLQYDDQKIVSGLRDNTIKIWD), 270 to 298 (GHTGSVLCLQYDERVIITGSSDSTVRVWD), 310 to 338 (HHCEAVLHLRFNNGMMVTCSKDRSIAVWD), 353 to 381 (GHRAAVNVVDFDDKYIVSASGDRTIKVWN), 393 to 421 (GHKRGIACLQYRDRLVVSGSSDNTIRLWD), 433 to 461 (GHEELVRCIRFDNKRIVSGAYDGKIKVWD), and 482 to 510 (EHSGRVFRLQFDEFQIVSSSHDDTILIWD).

Part of a SCF (SKP1-cullin-F-box) ubiquitin-protein ligase complex. Interacts with fbxo5.

Substrate recognition component of a SCF (SKP1-CUL1-F-box protein) E3 ubiquitin-protein ligase complex which mediates the ubiquitination and subsequent proteasomal degradation of target proteins. Probably recognizes and binds to phosphorylated target proteins. May participate in Wnt signaling. This chain is Beta-TrCP (fbxw1), found in Xenopus laevis (African clawed frog).